The primary structure comprises 411 residues: Signal-transducing adaptor protein 2 (411 aa).

Residues 20 to 120 (HYYESFLEKK…GFILTVVELR (101 aa)) form the PH domain. Position 22 is a phosphotyrosine (tyrosine 22). The region spanning 152–248 (WCFLQVSRLE…RALVPFLLDE (97 aa)) is the SH2 domain. Residue tyrosine 250 is modified to Phosphotyrosine; by PTK6. The segment at 291–320 (VPVSVSSQEDKLPQLPPLPQLPDTDENYVT) is disordered. Residues tyrosine 318 and tyrosine 330 each carry the phosphotyrosine modification. The disordered stretch occupies residues 338–364 (SSQAVPLKPKKPARLPAKPPKPSVVPK). Positions 390–410 (TRLGDITAELEEKLQKRRALE) form a coiled coil.

As to quaternary structure, interacts with PTK6 and CSF1R. Post-translationally, phosphorylated on tyrosine. Phosphorylated by PTK6 at Tyr-250 modulates PTK6-mediated STAT3 activation. Widely expressed.

The protein localises to the cytoplasm. It is found in the membrane. Its function is as follows. Substrate of protein kinase PTK6. May play a regulatory role in the acute-phase response in systemic inflammation and may modulate STAT3 activity. This Mus musculus (Mouse) protein is Signal-transducing adaptor protein 2 (Stap2).